A 161-amino-acid polypeptide reads, in one-letter code: Inner membrane assembly complex subunit 17 (161 aa).

The N-terminal 22 residues, methionine 1–tyrosine 22, are a transit peptide targeting the mitochondrion. Over serine 23–phenylalanine 84 the chain is Mitochondrial matrix. The chain crosses the membrane as a helical span at residues valine 85–tryptophan 107. Residues lysine 108–tryptophan 161 are Mitochondrial intermembrane-facing. Residues leucine 109 to serine 138 adopt a coiled-coil conformation.

Belongs to the INA17 family. Component of the inner membrane assembly (INA) complex, composed of INA17 and INA22. Interacts with a subset of F(1)F(0)-ATP synthase subunits of the F(1)-domain and the peripheral stalk.

The protein resides in the mitochondrion inner membrane. Its function is as follows. Component of the INA complex (INAC) that promotes the biogenesis of mitochondrial F(1)F(0)-ATP synthase. INAC facilitates the assembly of the peripheral stalk and promotes the assembly of the catalytic F(1)-domain with the membrane-embedded F(0)-domain. In Lachancea thermotolerans (strain ATCC 56472 / CBS 6340 / NRRL Y-8284) (Yeast), this protein is Inner membrane assembly complex subunit 17.